The primary structure comprises 96 residues: Basic blue protein (96 aa).

The region spanning 1-96 is the Phytocyanin domain; sequence AVYVVGGSGG…SGMKIAVNAL (96 aa). Residues histidine 39, cysteine 79, histidine 84, and methionine 89 each coordinate Cu cation. A disulfide bond links cysteine 52 and cysteine 85.

This Cucumis sativus (Cucumber) protein is Basic blue protein.